Reading from the N-terminus, the 343-residue chain is Protein-glutamate methylesterase/protein-glutamine glutaminase 2 (343 aa).

Positions 5–122 (KVLVVDDSAI…SVGDMSGQLV (118 aa)) constitute a Response regulatory domain. D56 carries the 4-aspartylphosphate modification. Residues 154–343 (AETSNKVIAI…SIADEIVRMV (190 aa)) enclose the CheB-type methylesterase domain. Catalysis depends on residues S166, H192, and D288.

Belongs to the CheB family. Phosphorylated by CheA. Phosphorylation of the N-terminal regulatory domain activates the methylesterase activity.

The protein resides in the cytoplasm. It carries out the reaction [protein]-L-glutamate 5-O-methyl ester + H2O = L-glutamyl-[protein] + methanol + H(+). The catalysed reaction is L-glutaminyl-[protein] + H2O = L-glutamyl-[protein] + NH4(+). Functionally, involved in chemotaxis. Part of a chemotaxis signal transduction system that modulates chemotaxis in response to various stimuli. Catalyzes the demethylation of specific methylglutamate residues introduced into the chemoreceptors (methyl-accepting chemotaxis proteins or MCP) by CheR. Also mediates the irreversible deamidation of specific glutamine residues to glutamic acid. The protein is Protein-glutamate methylesterase/protein-glutamine glutaminase 2 of Syntrophus aciditrophicus (strain SB).